Here is a 446-residue protein sequence, read N- to C-terminus: Oxysterols receptor LXR-beta (446 aa).

A disordered region spans residues 1–69 (MSSPTSSLDT…PERKRKKGPA (69 aa)). Residues 1-76 (MSSPTSSLDT…GPAPKMLGHE (76 aa)) form a transactivation AF-1; required for ligand-independent transactivation function region. Low complexity predominate over residues 17–28 (SPQPSTSATSPT). The segment at residues 75–152 (HELCRVCGDK…AGMREQCVLS (78 aa)) is a DNA-binding region (nuclear receptor). NR C4-type zinc fingers lie at residues 78-98 (CRVCGDKASGFHYNVLSCEGC) and 116-140 (CRGSGTCQMDAFMRRKCQLCRLRKC). Positions 159–201 (KRIQKQQQQQPPPPSEPAASSSGRPAASPGTSEASSQGSGEGE) are disordered. Residues 175–196 (PAASSSGRPAASPGTSEASSQG) show a composition bias toward low complexity. The interval 205–446 (LTAAQELMIQ…LLSEIWDVHE (242 aa)) is transactivation AF-2; required for ligand-dependent transactivation function; mediates interaction with CCAR2. One can recognise an NR LBD domain in the interval 208–446 (AQELMIQQLV…LLSEIWDVHE (239 aa)). Glycyl lysine isopeptide (Lys-Gly) (interchain with G-Cter in SUMO2) cross-links involve residues Lys-395 and Lys-433.

Belongs to the nuclear hormone receptor family. NR1 subfamily. In terms of assembly, forms a heterodimer with RXR. Interacts with CCAR2 (via N-terminus) in a ligand-independent manner. Interacts (when sumoylated) with GPS2; interaction with GPS2 onto hepatic acute phase protein promoters prevents N-Cor corepressor complex dissociation. Interacts with ABCA12 and ABCA1; this interaction is required for ABCA1 localization to the cell surface and is necessary for its normal activity and stability. Post-translationally, sumoylated by SUMO2 at Lys-395 and Lys-433 during the hepatic acute phase response, leading to promote interaction with GPS2 and prevent N-Cor corepressor complex dissociation. Ubiquitous.

It localises to the nucleus. In terms of biological role, nuclear receptor that exhibits a ligand-dependent transcriptional activation activity. Binds preferentially to double-stranded oligonucleotide direct repeats having the consensus half-site sequence 5'-AGGTCA-3' and 4-nt spacing (DR-4). Regulates cholesterol uptake through MYLIP-dependent ubiquitination of LDLR, VLDLR and LRP8; DLDLR and LRP8. Interplays functionally with RORA for the regulation of genes involved in liver metabolism. Induces LPCAT3-dependent phospholipid remodeling in endoplasmic reticulum (ER) membranes of hepatocytes, driving SREBF1 processing and lipogenesis. Via LPCAT3, triggers the incorporation of arachidonate into phosphatidylcholines of ER membranes, increasing membrane dynamics and enabling triacylglycerols transfer to nascent very low-density lipoprotein (VLDL) particles. Via LPCAT3 also counteracts lipid-induced ER stress response and inflammation, likely by modulating SRC kinase membrane compartmentalization and limiting the synthesis of lipid inflammatory mediators. Plays an anti-inflammatory role during the hepatic acute phase response by acting as a corepressor: inhibits the hepatic acute phase response by preventing dissociation of the N-Cor corepressor complex. The sequence is that of Oxysterols receptor LXR-beta (Nr1h2) from Mus musculus (Mouse).